A 426-amino-acid chain; its full sequence is C2H2 type master regulator of conidiophore development brlA (426 aa).

2 disordered regions span residues 25 to 71 (CPSM…DRGT) and 281 to 302 (GVRL…KQSL). Low complexity predominate over residues 30–44 (SSFSPLESPTPTPTS). Residues 45 to 58 (IYSQGSLASPSWPE) show a composition bias toward polar residues. Residues 288 to 297 (PSRKMARKQP) show a composition bias toward basic residues. 2 C2H2-type zinc fingers span residues 316–340 (FKCK…MKSH) and 346–371 (HVCW…TKTH). The interval 384–426 (LDETSPDYNPDYRGPLTADGRPMPGGTLDESMPSREISMEWDE) is disordered.

The protein resides in the nucleus. BrlA, abaA and wetA are pivotal regulators of conidiophore development and conidium maturation. They act individually and together to regulate their own expression and that of numerous other sporulation-specific genes. Binds promoters of target genes at brlA response elements (BREs) containing the conserved sequence 5'-(C/A)(A/G)AGGG(G/A)-3'. Positively regulates expression of the gliotoxin biosynthetic gene cluster in actively growing vegetative cells, and likely bridges morphological and chemical development during the life-cycle. Regulates (directly or indirectly) the ergot cluster genes. Positively regulates expression of the fumiquinazoline C biosynthetic gene cluster. Positively regulates expression of the melanin biosynthetic gene cluster. Mediates repression of ribosomal protein gene expression in response to nitrogen depletion. The protein is C2H2 type master regulator of conidiophore development brlA of Aspergillus fumigatus (strain ATCC MYA-4609 / CBS 101355 / FGSC A1100 / Af293) (Neosartorya fumigata).